A 136-amino-acid polypeptide reads, in one-letter code: Methylglyoxal synthase (136 aa).

The region spanning M1–A136 is the MGS-like domain. Substrate is bound by residues H8, K12, T34–T37, and S54–G55. Residue D60 is the Proton donor/acceptor of the active site. Substrate is bound at residue H87.

This sequence belongs to the methylglyoxal synthase family.

It catalyses the reaction dihydroxyacetone phosphate = methylglyoxal + phosphate. Functionally, catalyzes the formation of methylglyoxal from dihydroxyacetone phosphate. In Brevibacillus brevis (strain 47 / JCM 6285 / NBRC 100599), this protein is Methylglyoxal synthase.